Here is a 314-residue protein sequence, read N- to C-terminus: tRNA pseudouridine synthase B (314 aa).

Residue His-43 participates in substrate binding. Asp-48 serves as the catalytic Nucleophile. Substrate is bound by residues Tyr-76, Tyr-179, and Leu-200.

The protein belongs to the pseudouridine synthase TruB family. Type 1 subfamily.

The enzyme catalyses uridine(55) in tRNA = pseudouridine(55) in tRNA. Functionally, responsible for synthesis of pseudouridine from uracil-55 in the psi GC loop of transfer RNAs. The chain is tRNA pseudouridine synthase B from Salmonella paratyphi B (strain ATCC BAA-1250 / SPB7).